Here is a 2488-residue protein sequence, read N- to C-terminus: Neuron navigator 2 (2488 aa).

One can recognise a Calponin-homology (CH) domain in the interval 85–192 (GFDTQIYTDW…LFFSLSRYKQ (108 aa)). Composition is skewed to low complexity over residues 194 to 204 (QQQPQKQHLSS), 221 to 247 (QAGTPQQQVPVTPQAPCQPHQPAPHQQ), and 255 to 267 (QSSASSKDSSQSK). Disordered stretches follow at residues 194 to 675 (QQQP…GSNT) and 706 to 727 (TEGNVTAESSSTGVSVEPSHFT). Residues 299-315 (GGSTTANNRRSQSFNNY) show a composition bias toward polar residues. Over residues 356 to 369 (SGSSSTPTNCSTSS) the composition is skewed to low complexity. Polar residues predominate over residues 384–396 (KSLSVKHSATVSM). A compositionally biased stretch (pro residues) spans 401–410 (PPGPEAPRPT). Positions 492 to 506 (RTFSRALTNKKSSLK) are enriched in polar residues. A coiled-coil region spans residues 498–531 (LTNKKSSLKGNEKEKEKQQREKDKEKSKDLAKRA). Over residues 507 to 547 (GNEKEKEKQQREKDKEKSKDLAKRASVTERLDLKEEPKEDP) the composition is skewed to basic and acidic residues. A compositionally biased stretch (low complexity) spans 592–606 (MKSMPGKSPSAPAPS). Polar residues predominate over residues 615 to 626 (GKLSSGLPQQKP). 2 stretches are compositionally biased toward low complexity: residues 633 to 642 (SSSSSSLASS) and 657 to 675 (SSQTVSGSVGTTQTTGSNT). The span at 706–719 (TEGNVTAESSSTGV) shows a compositional bias: polar residues. Residues 743–771 (EARRLRTVKNIADLRQNLEETMSSLRGTQ) are a coiled coil. Disordered regions lie at residues 804-824 (LSWRLGQSSPRLQAGDAPSMG), 939-1151 (LGLG…QSGS), 1177-1200 (KSSALVSRSAGRKSSMDGAQNQDD), 1213-1283 (YRSL…SDNE), 1295-1338 (PAAQ…PIAT), 1355-1412 (MTQQ…TNAS), 1440-1460 (SLSSGGVPSHNSSTGLIASSK), 1473-1560 (VKTT…VTSP), and 1591-1629 (SLSNADGQYDPYTDSRFRNSSMSLDEKSRTMSRSGSFRD). Over residues 939 to 985 (LGLGDADSWDDSSSVSSGISDTIDNLSTDDINTSSSISSYANTPASS) the composition is skewed to low complexity. The span at 1091-1102 (KTDDAKVSEKGR) shows a compositional bias: basic and acidic residues. Over residues 1130–1142 (PSSSRTPTANANS) the composition is skewed to polar residues. Residues 1220-1245 (SKSNSRNGAGNRSSTSSIDSNISSKS) are compositionally biased toward low complexity. The span at 1299–1309 (PVSSPAQTSLQ) shows a compositional bias: polar residues. 2 stretches are compositionally biased toward low complexity: residues 1363–1380 (SPSGSGVLSSGSSSPLYS) and 1388–1404 (SPLASSPSSAHSAPSNS). Polar residues predominate over residues 1440–1456 (SLSSGGVPSHNSSTGLI). Positions 1477–1489 (LSESPLSSPAASP) are enriched in low complexity. Phosphoserine occurs at positions 1480, 1484, and 1488. Basic and acidic residues-rich tracts occupy residues 1498–1510 (RKQDSDPHLDRNT) and 1526–1535 (TQEDAKEWLR). Residues 1549 to 1560 (SPFSSGSSVTSP) are compositionally biased toward low complexity. A coiled-coil region spans residues 1686 to 1773 (EEKCQSEIRK…AAAQAAINGV (88 aa)). Disordered stretches follow at residues 1790 to 1887 (ADLR…LRNS) and 1951 to 1985 (AENDRLKSESQGSGCSRAPSQVSISASPRQSMGLS). Composition is skewed to polar residues over residues 1800 to 1820 (SDSVSSINSATSHSSVGSNIE), 1875 to 1887 (NGSTGSTPLLRNS), and 1959 to 1985 (ESQGSGCSRAPSQVSISASPRQSMGLS). A coiled-coil region spans residues 1897–1964 (MDSEAETVMQ…RLKSESQGSG (68 aa)). At Ser1977 the chain carries Phosphoserine. 2157–2164 (GPSGTGKT) provides a ligand contact to ATP. The disordered stretch occupies residues 2423 to 2488 (DGYSMPREGS…ILDSSLESTL (66 aa)). Low complexity predominate over residues 2460-2473 (YSSPQSYDSDSNSN).

It belongs to the Nav/unc-53 family. As to expression, highly expressed in the brain, kidney and liver. Also expressed in the thyroid, mammary gland, spinal cord, heart, placenta and lung. Abundantly expressed in colon cancers.

Its subcellular location is the nucleus. The catalysed reaction is ATP + H2O = ADP + phosphate + H(+). Functionally, possesses 3' to 5' helicase activity and exonuclease activity. Involved in neuronal development, specifically in the development of different sensory organs. The chain is Neuron navigator 2 (NAV2) from Homo sapiens (Human).